Consider the following 405-residue polypeptide: UDP-N-acetylglucosamine--N-acetylmuramyl-(pentapeptide) pyrophosphoryl-undecaprenol N-acetylglucosamine transferase (405 aa).

UDP-N-acetyl-alpha-D-glucosamine contacts are provided by residues 11–13 (TGG), Asn127, Arg168, Ser191, Ile248, and Gln293.

This sequence belongs to the glycosyltransferase 28 family. MurG subfamily.

The protein localises to the cell inner membrane. The catalysed reaction is di-trans,octa-cis-undecaprenyl diphospho-N-acetyl-alpha-D-muramoyl-L-alanyl-D-glutamyl-meso-2,6-diaminopimeloyl-D-alanyl-D-alanine + UDP-N-acetyl-alpha-D-glucosamine = di-trans,octa-cis-undecaprenyl diphospho-[N-acetyl-alpha-D-glucosaminyl-(1-&gt;4)]-N-acetyl-alpha-D-muramoyl-L-alanyl-D-glutamyl-meso-2,6-diaminopimeloyl-D-alanyl-D-alanine + UDP + H(+). It participates in cell wall biogenesis; peptidoglycan biosynthesis. Cell wall formation. Catalyzes the transfer of a GlcNAc subunit on undecaprenyl-pyrophosphoryl-MurNAc-pentapeptide (lipid intermediate I) to form undecaprenyl-pyrophosphoryl-MurNAc-(pentapeptide)GlcNAc (lipid intermediate II). The polypeptide is UDP-N-acetylglucosamine--N-acetylmuramyl-(pentapeptide) pyrophosphoryl-undecaprenol N-acetylglucosamine transferase (Sorangium cellulosum (strain So ce56) (Polyangium cellulosum (strain So ce56))).